Reading from the N-terminus, the 482-residue chain is Kynurenine 3-monooxygenase (482 aa).

It belongs to the aromatic-ring hydroxylase family. KMO subfamily. FAD serves as cofactor.

It localises to the mitochondrion outer membrane. The catalysed reaction is L-kynurenine + NADPH + O2 + H(+) = 3-hydroxy-L-kynurenine + NADP(+) + H2O. Its pathway is cofactor biosynthesis; NAD(+) biosynthesis; quinolinate from L-kynurenine: step 1/3. In terms of biological role, catalyzes the hydroxylation of L-kynurenine (L-Kyn) to form 3-hydroxy-L-kynurenine (L-3OHKyn). Required for synthesis of quinolinic acid. The polypeptide is Kynurenine 3-monooxygenase (Phaeosphaeria nodorum (strain SN15 / ATCC MYA-4574 / FGSC 10173) (Glume blotch fungus)).